A 345-amino-acid chain; its full sequence is Phosphate acyltransferase (345 aa).

This sequence belongs to the PlsX family. In terms of assembly, homodimer. Probably interacts with PlsY.

The protein localises to the cytoplasm. It carries out the reaction a fatty acyl-[ACP] + phosphate = an acyl phosphate + holo-[ACP]. It functions in the pathway lipid metabolism; phospholipid metabolism. In terms of biological role, catalyzes the reversible formation of acyl-phosphate (acyl-PO(4)) from acyl-[acyl-carrier-protein] (acyl-ACP). This enzyme utilizes acyl-ACP as fatty acyl donor, but not acyl-CoA. The sequence is that of Phosphate acyltransferase from Anaplasma phagocytophilum (strain HZ).